Consider the following 325-residue polypeptide: Beta-ketoacyl-[acyl-carrier-protein] synthase III (325 aa).

Active-site residues include cysteine 119 and histidine 252. Residues 253 to 257 are ACP-binding; it reads QANIR. Asparagine 282 is a catalytic residue.

It belongs to the thiolase-like superfamily. FabH family. In terms of assembly, homodimer.

Its subcellular location is the cytoplasm. The enzyme catalyses malonyl-[ACP] + acetyl-CoA + H(+) = 3-oxobutanoyl-[ACP] + CO2 + CoA. It participates in lipid metabolism; fatty acid biosynthesis. Functionally, catalyzes the condensation reaction of fatty acid synthesis by the addition to an acyl acceptor of two carbons from malonyl-ACP. Catalyzes the first condensation reaction which initiates fatty acid synthesis and may therefore play a role in governing the total rate of fatty acid production. Possesses both acetoacetyl-ACP synthase and acetyl transacylase activities. Its substrate specificity determines the biosynthesis of branched-chain and/or straight-chain of fatty acids. In Acidovorax ebreus (strain TPSY) (Diaphorobacter sp. (strain TPSY)), this protein is Beta-ketoacyl-[acyl-carrier-protein] synthase III.